Reading from the N-terminus, the 122-residue chain is Large ribosomal subunit protein uL14 (122 aa).

This sequence belongs to the universal ribosomal protein uL14 family. As to quaternary structure, part of the 50S ribosomal subunit. Forms a cluster with proteins L3 and L19. In the 70S ribosome, L14 and L19 interact and together make contacts with the 16S rRNA in bridges B5 and B8.

Its function is as follows. Binds to 23S rRNA. Forms part of two intersubunit bridges in the 70S ribosome. This is Large ribosomal subunit protein uL14 from Pseudomonas savastanoi pv. phaseolicola (strain 1448A / Race 6) (Pseudomonas syringae pv. phaseolicola (strain 1448A / Race 6)).